The sequence spans 331 residues: N-arachidonyl glycine receptor (331 aa).

The Extracellular segment spans residues 1–26 (MITLNNQDQPVPFNNSYPDEYEIAAL). A glycan (N-linked (GlcNAc...) asparagine) is linked at Asn-14. Residues 27–47 (VFYSCIFIIGLFVNITALWVF) traverse the membrane as a helical segment. At 48-56 (SCTTKKRTT) the chain is on the cytoplasmic side. A helical membrane pass occupies residues 57–77 (VTIYMMNVALVDLIFIMTLPF). The Extracellular portion of the chain corresponds to 78 to 95 (RMFYYAKDEWPFGEYFCQ). Cysteines 94 and 172 form a disulfide. Residues 96–116 (ILGALTVFYPSIALWLLAFIS) traverse the membrane as a helical segment. The Cytoplasmic segment spans residues 117-138 (ADRYMAIVQPKYAKELKNTCKA). The helical transmembrane segment at 139–159 (VLACVGVWIMTLTTTIPLLLL) threads the bilayer. Over 160–191 (HKDPDKDSTPATCLKISDIVYLKAVNVLNFTR) the chain is Extracellular. Asn-188 is a glycosylation site (N-linked (GlcNAc...) asparagine). The chain crosses the membrane as a helical span at residues 192–212 (LTFFFLIPLFIMIGCYLVIIH). Residues 213–232 (NLLHGRTSKLKPKVKEKSIR) are Cytoplasmic-facing. Residues 233 to 253 (IIITLLVQVLVCFMPFHICFA) form a helical membrane-spanning segment. The Extracellular portion of the chain corresponds to 254 to 268 (FLMLGTGENSYSPWG). Residues 269 to 289 (AFTTFLMNLSTCLDVILYYIV) form a helical membrane-spanning segment. Residues 290–331 (SKQFQARVISVMLYRNYLRGMRRKSFRSGSLRSLSNINSEML) are Cytoplasmic-facing. Phosphoserine is present on Ser-322.

It belongs to the G-protein coupled receptor 1 family.

The protein resides in the cell membrane. It is found in the cytoplasmic vesicle membrane. G protein-coupled receptor (GPCR) that plays a role in diverse physiological processes particularly within the immune and nervous systems. Becomes active when triggered by various endogenous ligands including endocannabinoid N-arachidonyl glycine (NAGly), delta-9-tetrahydrocannabinol or resolvin D2/RvD2 derived from the omega-3 fatty acid docosahexaenoic acid (DHA). Upon RvD2 binding, facilitates the resolution of inflammation, aiding in tissue repair and homeostasis. Mechanistically, RvD2 ligation initiates Galphas protein coupling, activation of cAMP-PKA signaling pathway and phosphorylation of STAT3, leading to RvD2-stimulated macrophage phagocytosis. Mediates NAGly-induced process of reorganization of actin filaments and induction of acrosomal exocytosis. Activation by N-arachidonoyl glycine (NAGly) can also induce apoptosis in macrophages. Plays a role in homeostasis of CD8+ subsets of intraepithelial lymphocytes (IELs) (CD8alphaalpha and CD8alphabeta IELs) in small intestine by supporting preferential migration of CD8alphaalpha T-cells to intraepithelial compartment over lamina propria compartment, and by mediating their reconstitution into small intestine after bone marrow transplant. Participates also in hypotensive responses, mediating reduction in intraocular and blood pressure. The sequence is that of N-arachidonyl glycine receptor from Macaca fascicularis (Crab-eating macaque).